The sequence spans 325 residues: ATP phosphoribosyltransferase (325 aa).

The protein belongs to the ATP phosphoribosyltransferase family. Long subfamily. The cofactor is Mg(2+).

The protein resides in the cytoplasm. It catalyses the reaction 1-(5-phospho-beta-D-ribosyl)-ATP + diphosphate = 5-phospho-alpha-D-ribose 1-diphosphate + ATP. It functions in the pathway amino-acid biosynthesis; L-histidine biosynthesis; L-histidine from 5-phospho-alpha-D-ribose 1-diphosphate: step 1/9. With respect to regulation, feedback inhibited by histidine. Its function is as follows. Catalyzes the condensation of ATP and 5-phosphoribose 1-diphosphate to form N'-(5'-phosphoribosyl)-ATP (PR-ATP). Has a crucial role in the pathway because the rate of histidine biosynthesis seems to be controlled primarily by regulation of HisG enzymatic activity. The chain is ATP phosphoribosyltransferase from Bradyrhizobium sp. (strain ORS 278).